Here is a 92-residue protein sequence, read N- to C-terminus: Large ribosomal subunit protein eL31 (92 aa).

Belongs to the eukaryotic ribosomal protein eL31 family.

In Haloquadratum walsbyi (strain DSM 16790 / HBSQ001), this protein is Large ribosomal subunit protein eL31.